A 165-amino-acid polypeptide reads, in one-letter code: Large ribosomal subunit protein uL10 (165 aa).

It belongs to the universal ribosomal protein uL10 family. In terms of assembly, part of the ribosomal stalk of the 50S ribosomal subunit. The N-terminus interacts with L11 and the large rRNA to form the base of the stalk. The C-terminus forms an elongated spine to which L12 dimers bind in a sequential fashion forming a multimeric L10(L12)X complex.

Forms part of the ribosomal stalk, playing a central role in the interaction of the ribosome with GTP-bound translation factors. The polypeptide is Large ribosomal subunit protein uL10 (Yersinia pseudotuberculosis serotype IB (strain PB1/+)).